The sequence spans 342 residues: Cytochrome c oxidase subunit 2 (342 aa).

Positions 1–22 (MKLWKTASRFLPLSFLTLFLTG) are cleaved as a signal peptide. Cys23 is lipidated: N-palmitoyl cysteine. Cys23 carries S-diacylglycerol cysteine lipidation. The Extracellular portion of the chain corresponds to 23-50 (CLGEENLTALDPKGPQAQWIYDNMILSI). Residues 23–249 (CLGEENLTAL…MSAEVEEPTE (227 aa)) are cytochrome c oxidase subunit II. The helical transmembrane segment at 51-69 (IVMALVSIVVFAIFFIILA) threads the bilayer. Topologically, residues 70 to 89 (KYRRKPGDDEIPKQVHGNTA) are cytoplasmic. The helical transmembrane segment at 90–108 (LEITWTVIPIILLVILAVP) threads the bilayer. At 109 to 342 (TITGTFMFAD…AYLRSLKVME (234 aa)) the chain is on the extracellular side. His175, Cys210, Cys214, and His218 together coordinate Cu cation. In terms of domain architecture, Cytochrome c spans 250–342 (TLANQGRQVF…AYLRSLKVME (93 aa)). Cys264, Cys267, His268, and Met317 together coordinate heme c.

It belongs to the cytochrome c oxidase subunit 2 family. Cu cation is required as a cofactor. Heme c serves as cofactor.

The protein resides in the cell membrane. It catalyses the reaction 4 Fe(II)-[cytochrome c] + O2 + 8 H(+)(in) = 4 Fe(III)-[cytochrome c] + 2 H2O + 4 H(+)(out). Its function is as follows. Subunits I and II form the functional core of the enzyme complex. Electrons originating in cytochrome c are transferred via heme a and Cu(A) to the binuclear center formed by heme a3 and Cu(B). This chain is Cytochrome c oxidase subunit 2 (ctaC), found in Alkalihalophilus pseudofirmus (strain ATCC BAA-2126 / JCM 17055 / OF4) (Bacillus pseudofirmus).